The following is a 379-amino-acid chain: uncharacterized protein (379 aa).

A helical membrane pass occupies residues 7 to 27 (VYIFAGIFLFIALIILIKIFF).

It localises to the membrane. This is an uncharacterized protein from Caenorhabditis elegans.